A 283-amino-acid chain; its full sequence is Methyltransferase cpsF (283 aa).

The protein belongs to the methyltransferase superfamily. LaeA methyltransferase family.

The enzyme catalyses campesine A + S-adenosyl-L-methionine = campesine B + S-adenosyl-L-homocysteine + H(+). It participates in alkaloid biosynthesis. Methyltransferase; part of the gene cluster that mediates the biosynthesis of campesine G, a dimeric indole piperazine alkaloid that shows good insecticidal activity Galleria mellonella. Within the pathway, cpsF methylates campesine A at N13 of piperazine ring to produce campesine B. The non-canonical non-ribosomal peptide synthetase cpsA catalyzes the first steps of the pathway by producing L-tryptophanal and L-valinal from their respective amino-acids. These products condensate spontaneously to form trypyl-valyl pyrazine also known as didehydrocampesine A. The NmrA-like family domain-containing oxidoreductase cpsB is the next enzyme in cps pathway and reduces the unstable didehydrocampesine A to campesine A. The methyltransferase cpsF and the acetyltransferase cpsE both recognize N13 of piperazine ring to carry out methylation and acetylation of campesine A to produce campesine C and B, respectively. The cytochrome P450 monooxygenase cpsD then acts as a dimerase that catalyzes oxidative heterocoupling between campesine B and C to produce heterodimers with unexpected 6/5/6/6/6/6/5/6 eight-ring scaffold called campesine D. Finally,the cytochrome P450 monooxygenase cpsC is a regioselective dehydrogenase that catalyzes dehydrogenation reaction towards C2-N1 to produce campesine G. The protein is Methyltransferase cpsF of Aspergillus campestris (strain IBT 28561).